A 576-amino-acid polypeptide reads, in one-letter code: K(+)/H(+) antiporter NhaP2 (576 aa).

Transmembrane regions (helical) follow at residues 6-26, 34-54, 58-78, 87-107, 109-129, 163-183, 185-205, 219-239, 242-262, 271-291, 299-319, 335-355, and 359-379; these read INSFFLIGALLTAVSVLLSPM, ILLIFLAVGILAGEDGPGGIL, YSTAYLVSNLALAIILLDGGM, VALWPALSLATFGVAITTSIT, MMAAWLFDLHWLQGLLVGAIV, PMAVFLTVTLIAILANVDTEM, FSFMFISFIKQFGLGICLGLG, LADGLYSILVLSGGLIIYAAS, LGGSGILSIYLVGLFLGNKPT, VLDGMTWVSQIGMFLVLGLLL, ILIPGFALAFGMILFARPVAV, WFISWVGLRGAVPIILAVFPM, and LPGAQLYFNLAFFVVLVSLLV. The RCK C-terminal domain occupies 405 to 486; the sequence is SGVEIYPSSE…LEALSNLFSQ (82 aa).

The protein belongs to the monovalent cation:proton antiporter 1 (CPA1) transporter (TC 2.A.36) family. NhaP2 subfamily.

Its subcellular location is the cell inner membrane. It catalyses the reaction K(+)(in) + H(+)(out) = K(+)(out) + H(+)(in). In terms of biological role, k(+)/H(+) antiporter that extrudes potassium in exchange for external protons and maintains the internal concentration of potassium under toxic levels. This is K(+)/H(+) antiporter NhaP2 from Shewanella baltica (strain OS155 / ATCC BAA-1091).